The chain runs to 380 residues: MSHNPIRPWRNIERRKSRQVRVGNLMVGGDAPIAVQTMTNTPTEDAAATIAQILRCAEAGADIVRVSCPTEESTKAMREIVKASPVPLVADIHFHYKRGIEAADAGAACLRINPGNIGSHARVKEVVAAARANGCSMRIGVNGGSLERHLLEKYGEPCPDAMVESALDHARILDDLGFYDYKISVKASDMFLTVAAYHALAEATDAPLHLGITEAGGLRTGTVKSSIGMGALLWAGIGDTIRVSLSAEPEEEVKVGFEMLKSLGLRTRGVNIVACPSCARQGFDVIRTVETLEKRLAHISEPISLSIIGCVVNGPGEASLTDLGFTGGGKESGKMFVNGRADHNVANADMVEHIVKLVEDKAARLKAQRDAEEATEVPAE.

[4Fe-4S] cluster-binding residues include Cys275, Cys278, Cys310, and Glu317.

It belongs to the IspG family. It depends on [4Fe-4S] cluster as a cofactor.

It carries out the reaction (2E)-4-hydroxy-3-methylbut-2-enyl diphosphate + oxidized [flavodoxin] + H2O + 2 H(+) = 2-C-methyl-D-erythritol 2,4-cyclic diphosphate + reduced [flavodoxin]. Its pathway is isoprenoid biosynthesis; isopentenyl diphosphate biosynthesis via DXP pathway; isopentenyl diphosphate from 1-deoxy-D-xylulose 5-phosphate: step 5/6. Converts 2C-methyl-D-erythritol 2,4-cyclodiphosphate (ME-2,4cPP) into 1-hydroxy-2-methyl-2-(E)-butenyl 4-diphosphate. The chain is 4-hydroxy-3-methylbut-2-en-1-yl diphosphate synthase (flavodoxin) from Hyphomonas neptunium (strain ATCC 15444).